The chain runs to 487 residues: 2-aminomuconic semialdehyde dehydrogenase (487 aa).

231-236 (GSQPTA) contacts NAD(+). The active-site Proton acceptor is glutamate 253. Cysteine 287 functions as the Nucleophile in the catalytic mechanism.

It belongs to the aldehyde dehydrogenase family.

Its subcellular location is the cytoplasm. The catalysed reaction is 2-aminomuconate 6-semialdehyde + NAD(+) + H2O = (2Z,4E)-2-aminomuconate + NADH + 2 H(+). Its pathway is amino-acid degradation; L-kynurenine degradation. Functionally, catalyzes the NAD-dependent oxidation of 2-aminomuconic semialdehyde of the kynurenine metabolic pathway in L-tryptophan degradation. This Bos taurus (Bovine) protein is 2-aminomuconic semialdehyde dehydrogenase (ALDH8A1).